Here is a 258-residue protein sequence, read N- to C-terminus: Imidazole glycerol phosphate synthase subunit HisF (258 aa).

Active-site residues include Asp-11 and Asp-130.

It belongs to the HisA/HisF family. In terms of assembly, heterodimer of HisH and HisF.

The protein resides in the cytoplasm. The catalysed reaction is 5-[(5-phospho-1-deoxy-D-ribulos-1-ylimino)methylamino]-1-(5-phospho-beta-D-ribosyl)imidazole-4-carboxamide + L-glutamine = D-erythro-1-(imidazol-4-yl)glycerol 3-phosphate + 5-amino-1-(5-phospho-beta-D-ribosyl)imidazole-4-carboxamide + L-glutamate + H(+). Its pathway is amino-acid biosynthesis; L-histidine biosynthesis; L-histidine from 5-phospho-alpha-D-ribose 1-diphosphate: step 5/9. In terms of biological role, IGPS catalyzes the conversion of PRFAR and glutamine to IGP, AICAR and glutamate. The HisF subunit catalyzes the cyclization activity that produces IGP and AICAR from PRFAR using the ammonia provided by the HisH subunit. This is Imidazole glycerol phosphate synthase subunit HisF from Gluconacetobacter diazotrophicus (strain ATCC 49037 / DSM 5601 / CCUG 37298 / CIP 103539 / LMG 7603 / PAl5).